A 94-amino-acid polypeptide reads, in one-letter code: Co-chaperonin GroES (94 aa).

The protein belongs to the GroES chaperonin family. In terms of assembly, heptamer of 7 subunits arranged in a ring. Interacts with the chaperonin GroEL.

The protein resides in the cytoplasm. Functionally, together with the chaperonin GroEL, plays an essential role in assisting protein folding. The GroEL-GroES system forms a nano-cage that allows encapsulation of the non-native substrate proteins and provides a physical environment optimized to promote and accelerate protein folding. GroES binds to the apical surface of the GroEL ring, thereby capping the opening of the GroEL channel. In Brevibacillus brevis (strain 47 / JCM 6285 / NBRC 100599), this protein is Co-chaperonin GroES.